We begin with the raw amino-acid sequence, 474 residues long: tRNA modification GTPase MnmE (474 aa).

Residues R25, E82, and K123 each coordinate (6S)-5-formyl-5,6,7,8-tetrahydrofolate. Residues 219–386 (GIKVVIAGKP…LKKHLYDSAM (168 aa)) form the TrmE-type G domain. N229 provides a ligand contact to K(+). Residues 229–234 (NAGKSS), 248–254 (SNISGTT), and 273–276 (DTAG) contribute to the GTP site. S233 contributes to the Mg(2+) binding site. Residues S248, I250, and T253 each contribute to the K(+) site. T254 serves as a coordination point for Mg(2+). Position 474 (K474) interacts with (6S)-5-formyl-5,6,7,8-tetrahydrofolate.

This sequence belongs to the TRAFAC class TrmE-Era-EngA-EngB-Septin-like GTPase superfamily. TrmE GTPase family. In terms of assembly, homodimer. Heterotetramer of two MnmE and two MnmG subunits. It depends on K(+) as a cofactor.

The protein resides in the cytoplasm. Functionally, exhibits a very high intrinsic GTPase hydrolysis rate. Involved in the addition of a carboxymethylaminomethyl (cmnm) group at the wobble position (U34) of certain tRNAs, forming tRNA-cmnm(5)s(2)U34. In Blochmanniella floridana, this protein is tRNA modification GTPase MnmE.